We begin with the raw amino-acid sequence, 63 residues long: Adipokinetic prohormone type 1 (63 aa).

The first 22 residues, 1–22, serve as a signal peptide directing secretion; the sequence is MVQRCALVVLLVVAVAAALCSA. Position 23 is a pyrrolidone carboxylic acid (glutamine 23). At threonine 32 the chain carries Threonine amide.

It belongs to the AKH/HRTH/RPCH family.

It localises to the secreted. This hormone, released from cells in the corpora cardiaca, causes release of diglycerides from the fat body and stimulation of muscles to use these diglycerides as an energy source during energy-demanding processes. The chain is Adipokinetic prohormone type 1 from Locusta migratoria (Migratory locust).